The primary structure comprises 346 residues: Biotin synthase (346 aa).

A Radical SAM core domain is found at 38 to 256 (RQVQVSTLLS…IAVARIMMPT (219 aa)). Residues Cys53, Cys57, and Cys60 each coordinate [4Fe-4S] cluster. [2Fe-2S] cluster contacts are provided by Cys97, Cys128, Cys188, and Arg260.

This sequence belongs to the radical SAM superfamily. Biotin synthase family. In terms of assembly, homodimer. [4Fe-4S] cluster serves as cofactor. It depends on [2Fe-2S] cluster as a cofactor.

The catalysed reaction is (4R,5S)-dethiobiotin + (sulfur carrier)-SH + 2 reduced [2Fe-2S]-[ferredoxin] + 2 S-adenosyl-L-methionine = (sulfur carrier)-H + biotin + 2 5'-deoxyadenosine + 2 L-methionine + 2 oxidized [2Fe-2S]-[ferredoxin]. Its pathway is cofactor biosynthesis; biotin biosynthesis; biotin from 7,8-diaminononanoate: step 2/2. Functionally, catalyzes the conversion of dethiobiotin (DTB) to biotin by the insertion of a sulfur atom into dethiobiotin via a radical-based mechanism. The sequence is that of Biotin synthase from Escherichia fergusonii (strain ATCC 35469 / DSM 13698 / CCUG 18766 / IAM 14443 / JCM 21226 / LMG 7866 / NBRC 102419 / NCTC 12128 / CDC 0568-73).